The sequence spans 188 residues: uncharacterized protein (188 aa).

A helical transmembrane segment spans residues 136 to 156 (TLVKLLLLFLSLMVVIVGVWW).

It is found in the host membrane. This is an uncharacterized protein from Magallana gigas (Pacific oyster).